Consider the following 448-residue polypeptide: tRNA-2-methylthio-N(6)-dimethylallyladenosine synthase (448 aa).

Residues 3–118 form the MTTase N-terminal domain; sequence KKVFIKTFGC…LPELLNARAA (116 aa). Residues Cys12, Cys49, Cys81, Cys155, Cys159, and Cys162 each contribute to the [4Fe-4S] cluster site. The region spanning 141–374 is the Radical SAM core domain; that stretch reads RVEGASAFVS…QAVINRNILE (234 aa). The TRAM domain occupies 377-440; the sequence is QERVGTVQRL…TYTLRGEVVM (64 aa).

Belongs to the methylthiotransferase family. MiaB subfamily. In terms of assembly, monomer. [4Fe-4S] cluster serves as cofactor.

It is found in the cytoplasm. The catalysed reaction is N(6)-dimethylallyladenosine(37) in tRNA + (sulfur carrier)-SH + AH2 + 2 S-adenosyl-L-methionine = 2-methylsulfanyl-N(6)-dimethylallyladenosine(37) in tRNA + (sulfur carrier)-H + 5'-deoxyadenosine + L-methionine + A + S-adenosyl-L-homocysteine + 2 H(+). Its function is as follows. Catalyzes the methylthiolation of N6-(dimethylallyl)adenosine (i(6)A), leading to the formation of 2-methylthio-N6-(dimethylallyl)adenosine (ms(2)i(6)A) at position 37 in tRNAs that read codons beginning with uridine. The chain is tRNA-2-methylthio-N(6)-dimethylallyladenosine synthase from Acidovorax sp. (strain JS42).